The primary structure comprises 1334 residues: CRISPR-associated endonuclease Cas9 (1334 aa).

Asp-10 serves as the catalytic For RuvC-like nuclease domain. Asp-10, Glu-765, and Glu-769 together coordinate Mn(2+). The 152-residue stretch at 773 to 924 folds into the HNH Cas9-type domain; sequence TGKGKNNSRP…DKARFIHRQL (152 aa). The active-site Proton acceptor for HNH nuclease domain is the His-843. His-986 is a Mn(2+) binding site.

This sequence belongs to the CRISPR-associated protein Cas9 family. Subtype II-A subfamily. As to quaternary structure, monomer. Binds crRNA and tracrRNA. The cofactor is Mg(2+).

Its function is as follows. CRISPR (clustered regularly interspaced short palindromic repeat) is an adaptive immune system that provides protection against mobile genetic elements (viruses, transposable elements and conjugative plasmids). CRISPR clusters contain spacers, sequences complementary to antecedent mobile elements, and target invading nucleic acids. CRISPR clusters are transcribed and processed into CRISPR RNA (crRNA). In type II CRISPR systems correct processing of pre-crRNA requires a trans-encoded small RNA (tracrRNA), endogenous ribonuclease 3 (rnc) and this protein. The tracrRNA serves as a guide for ribonuclease 3-aided processing of pre-crRNA. Subsequently Cas9/crRNA/tracrRNA endonucleolytically cleaves linear or circular dsDNA target complementary to the spacer; Cas9 is inactive in the absence of the 2 guide RNAs (gRNA). Cas9 recognizes the protospacer adjacent motif (PAM) in the CRISPR repeat sequences to help distinguish self versus nonself, as targets within the bacterial CRISPR locus do not have PAMs. PAM recognition is also required for catalytic activity. This Listeria innocua serovar 6a (strain ATCC BAA-680 / CLIP 11262) protein is CRISPR-associated endonuclease Cas9.